The primary structure comprises 821 residues: Lon protease (821 aa).

A Lon N-terminal domain is found at 18–216; the sequence is LPLMSLREVV…KVYELLQGEI (199 aa). An ATP-binding site is contributed by 368-375; that stretch reads GPPGVGKT. One can recognise a Lon proteolytic domain in the interval 606–787; that stretch reads TSQVGVCTGL…DEVLPQALMA (182 aa). Active-site residues include Ser693 and Lys736.

This sequence belongs to the peptidase S16 family. As to quaternary structure, homohexamer. Organized in a ring with a central cavity.

It is found in the cytoplasm. The enzyme catalyses Hydrolysis of proteins in presence of ATP.. Its function is as follows. ATP-dependent serine protease that mediates the selective degradation of mutant and abnormal proteins as well as certain short-lived regulatory proteins. Required for cellular homeostasis and for survival from DNA damage and developmental changes induced by stress. Degrades polypeptides processively to yield small peptide fragments that are 5 to 10 amino acids long. Binds to DNA in a double-stranded, site-specific manner. The sequence is that of Lon protease from Nitratidesulfovibrio vulgaris (strain ATCC 29579 / DSM 644 / CCUG 34227 / NCIMB 8303 / VKM B-1760 / Hildenborough) (Desulfovibrio vulgaris).